The primary structure comprises 236 residues: Chloride intracellular channel protein 3 (236 aa).

Residues 1-88 are required for insertion into the membrane; the sequence is MAETKLQLFV…EDFLEETLGP (88 aa). Residues 12–90 form the GST N-terminal domain; that stretch reads ASEDGESVGH…FLEETLGPPD (79 aa). Positions 22 to 25 match the G-site motif; the sequence is CPSC. Residues Cys22 and Cys25 are joined by a disulfide bond. A helical membrane pass occupies residues 24 to 44; that stretch reads SCQRLFMVLLLKGVPFTLTTV. Residues Ser49 and Ser159 each carry the phosphoserine modification. Residues 68 to 235 enclose the GST C-terminal domain; that stretch reads DSDAKTDTLQ…LAAYRPAVHP (168 aa).

Belongs to the chloride channel CLIC family. As to quaternary structure, associated with the C-terminal of MAPK15. As to expression, detected in placenta (at protein level). Widely expressed. High expression is found in placenta followed by lung and heart. Low expression in skeletal muscle, kidney and pancreas.

The protein localises to the nucleus. Its subcellular location is the membrane. It is found in the cell membrane. It localises to the cytoplasm. The protein resides in the secreted. The protein localises to the extracellular space. Its subcellular location is the extracellular matrix. The catalysed reaction is chloride(in) = chloride(out). With respect to regulation, inhibited by rapamycin, amphotericin B and IAA-94. In terms of biological role, in the soluble state, catalyzes glutaredoxin-like thiol disulfide exchange reactions with reduced glutathione as electron donor. Reduced in a glutathione-dependent way and secreted into the extracellular matrix where it activates TGM2 and promotes blood vessel growth during tissue remodeling as occurs in tumorigenesis. Can reduce specific cysteines in TGM2 and regulate cofactor binding. Can insert into membranes and form outwardly rectifying chloride ion channels. May participate in cellular growth control. The protein is Chloride intracellular channel protein 3 of Homo sapiens (Human).